The following is a 37-amino-acid chain: Large ribosomal subunit protein bL36c (37 aa).

This sequence belongs to the bacterial ribosomal protein bL36 family.

The protein resides in the plastid. The protein localises to the chloroplast. This is Large ribosomal subunit protein bL36c from Huperzia lucidula (Shining clubmoss).